The primary structure comprises 507 residues: MNDKQKKPQKLKARLPRGFVDRTAGDIRAVNEMTAKIREVYEHYGFDPLETPQFEYTDALGKFLPDSDRPNEGVFSLQDDDEQWMSLRYDLTAPLARHVAENFNEIQLPYRTYRAGYVFRNEKPGPGRFRQFMQFDADTVGAPGVQADAEMCMMMADTLEALGIKRGDYVVRVNNRKVLDGVLEAIGLGGDDKAGQRLNVLRAIDKLDKFGPEGVALLLGPGRKDESGDFTKGAGLDQAQIDKVLFFVGIKDYAESASRLAELVAGTSKGAEGVEELNFIGTLVASAGYGADRIKIDPSIVRGLEYYTGPVYEAELSFDVTNEKGEKVVFGSVGGGGRYDGLVSRFMGQPVPATGFSIGVSRLMTALKNLGKLGASEVIEPVLVTVMDGDVEAMGRYQKMTQDLRAAGIRAEMFQGNWKKFGNQLKYADRRGCPVAIIQGGDERATGVVQIKDLIEGKRLSGEIEDNASWREARVAQETVPEADLVAKVREILAAQAEDRKRAGGDV.

Belongs to the class-II aminoacyl-tRNA synthetase family. In terms of assembly, homodimer.

Its subcellular location is the cytoplasm. It catalyses the reaction tRNA(His) + L-histidine + ATP = L-histidyl-tRNA(His) + AMP + diphosphate + H(+). The chain is Histidine--tRNA ligase from Rhizobium leguminosarum bv. trifolii (strain WSM2304).